Reading from the N-terminus, the 501-residue chain is Histidine--tRNA ligase (501 aa).

Belongs to the class-II aminoacyl-tRNA synthetase family. Homodimer.

It localises to the cytoplasm. It catalyses the reaction tRNA(His) + L-histidine + ATP = L-histidyl-tRNA(His) + AMP + diphosphate + H(+). The chain is Histidine--tRNA ligase from Methylocella silvestris (strain DSM 15510 / CIP 108128 / LMG 27833 / NCIMB 13906 / BL2).